We begin with the raw amino-acid sequence, 350 residues long: Biotin synthase (350 aa).

In terms of domain architecture, Radical SAM core spans 54-278 (REIQLSTLLS…TMPQSYVRLS (225 aa)). Cys69, Cys73, and Cys76 together coordinate [4Fe-4S] cluster. Positions 113, 144, 204, and 276 each coordinate [2Fe-2S] cluster.

It belongs to the radical SAM superfamily. Biotin synthase family. As to quaternary structure, homodimer. It depends on [4Fe-4S] cluster as a cofactor. [2Fe-2S] cluster is required as a cofactor.

It carries out the reaction (4R,5S)-dethiobiotin + (sulfur carrier)-SH + 2 reduced [2Fe-2S]-[ferredoxin] + 2 S-adenosyl-L-methionine = (sulfur carrier)-H + biotin + 2 5'-deoxyadenosine + 2 L-methionine + 2 oxidized [2Fe-2S]-[ferredoxin]. The protein operates within cofactor biosynthesis; biotin biosynthesis; biotin from 7,8-diaminononanoate: step 2/2. Functionally, catalyzes the conversion of dethiobiotin (DTB) to biotin by the insertion of a sulfur atom into dethiobiotin via a radical-based mechanism. The sequence is that of Biotin synthase from Neisseria gonorrhoeae (strain ATCC 700825 / FA 1090).